The chain runs to 279 residues: Prostatic spermine-binding protein (279 aa).

Positions Met-1 to Ala-17 are cleaved as a signal peptide. Gln-18 carries the post-translational modification Pyrrolidone carboxylic acid. Residues Gln-18–Asn-151 enclose the Jacalin-type lectin domain. Residue Asn-62 is glycosylated (N-linked (GlcNAc...) asparagine). Composition is skewed to acidic residues over residues Asp-160–Asp-177 and Asn-185–Glu-279. A disordered region spans residues Asp-160 to Glu-279.

This sequence to mouse SBP. In terms of tissue distribution, prostate.

Spermine-binding protein is an androgen regulated ventral prostate glycoprotein that binds various polyamines. This Rattus norvegicus (Rat) protein is Prostatic spermine-binding protein (Sbp).